The primary structure comprises 2410 residues: MTLSNGSNGANGTSNGNGAHPSANGFHNAANGGANNGSANGGAEHDAGRPQVDGDISSAIAVIGVSGRFPGDATSPRHLWDLLKEGRNALSDVPESRFNIDGFYHPDGGRAGTLNTKQGYFLKSDVDKFDAGFFSITPEEARGMDPTQRILLELAYEGLENAGLKIDEVANQHMSCYIGACQHDYWDLQAYDMDSAPKYTATGTGPALLSNRISWFFNLKGPSVTIDTACSSTLTALHLAGQSIRNGESDSALVGGLGLHLLPNFGVFMSSMSFLSADNKCHSFDASANGYARAEGGGFVVLKRLDKALADGDTIRAVLRSTGSNQDGRTLGITQPSASRQEELIRATYASAGLSFDKTNLFEAHGTGTKVGDPIECSVIGNVFGKTREKPVYVGSVKSNIGHLEGASGLAGLVKTIYSLESGVISPTYGLEHVNPKIKLDEWKINIPTEEIKWPAGLRRASINSFGYGGANAHAVLDDAYHFLKTHNLKGHHNTKVEGVLNTGLIANGSQDVIEGTDKKSHLFLLSSHEESGIARLSQTLQAYLAETSARKLPEDQFLHRLAYTLSEKRSALPWKTYAAASTIEELQQALDGAPAKAARVPRSQALTFIFTGQGAQWFAMGRELQKYPVFQQSLHACSQYLKDFGSTWDLVEELNRDAKESIIDLPYVSQPSCTALQLSIIDLLASWGIHPQVTVGHSSGEIAAAYAKGAFDKEAAMRIAYFRGHLTGNITKTGSMAAVGLGPDRVSEYMSRVTAGKIVIACINSPASVTLSGDVEGIDEVLTFLQADDIFARKLRVTTAYHSHHMQQISEEYLNSLSGKWELKPGNPKVRMFSSVSAKAIDGTELGPAYWVANLVSPVNFSGAVTAAANAGALGKRKTSGKKGSADAMVEIGPHAALQGPLKQILDSIGDKGASPKYFSAIKRKQDAIQTTLEVVGELLVLGHQVNIPLANTYTETTSALVDLPPYAWNTANSYWHESAAVTAYKQRKHPRLELLGVRDPRSTKAEPAWHNYLRISEQPWIEHHQFQNTNIYPMAGMIVMAIEGLRQVETRADVEGYTIRDVNIGSALVVPPDQTVETRLQLTPWRSGPNVSWSHWTEFTVSSRNESGSWTTNCTGLVSTSYKHDTNSTFLDEEAAANALLNQEYKDISKSDLPSVDPTVFYTKLDESGFSLGPAFRGVKELNLFDHKAHFSMEVIDTKEFYPKKWEPAHLIHPAVLDVFVHLLISSTGDAAEIKARVPVSTASLYISADFDSTGGTKYHGFSTSKKHGATNMLSDVIAFAEGGSKALIALKGCKTVPLRGASDSSSGDGQPLGHVPVVPKKVVDVEISDAATLGQLLTGTDLASKLASYLSLLGQKRPGLRVLEYSSSTSSTLLKALTAQAEDLQGSLSSVALTTPLDGPADELTSVPETWKNKVRQEKLDLAQDPSTQGFEDVALDVIILDVEDQQGDISLVLKNAKKVLKPSGILLIANHTAAISTDLLTSTGFTSTTVSDLIIARHKPETEPPVRRVLVVTPSTTSPGLGRLITQAESDLTSRGYEVAKTDFGSIPEQATPFLTLSALDIDAPFLEGFHHETFAKLRSLFLASRGTLWLTLDTASRGLVNGLGRTIRAEHPDISFTTLGLDASAALDSASNTKTISSIIDNISRKTFGETSDSEYVIRDNQVLIERLIPNPGLKALLDSSKTGNKLSAVKIPLKQVAKPLQLSIRDHGLLDTLEYLSVPDLPEPLGDNQIEIEVGSVGLNFRDVMVAMGQMEDSTLGIECAGVVVKVGAGVQKFKVGDRVFGMHAGCFQTRVRVDPRTFQRTPDNLGDEEAASLMCTSATVVHSLIDVARLQRGESVLIHSAAGGVGQTAIRLAKHLGAEIFATVSSEKKKRLLVEEYGIKESHIFNSRDYSFADGILRLTNQRGVDVVINSLAGEALRRTWLCVAPFGRFIELGKRDIYDNSGLDMRPFLDNITFSGLDILTQVISYPDRFEAIGNQVVELLSKNAISPLNNLARYSFGEVSKAFRLMQSGGHVGKIVLYPRPDDIVPVVPDGLESFCLPHDATYVLIGGLGGIGRSVTRLLVQRGARHLVFLSRSAASRPEAQALLDEVHAQGVQAKAFAVDVAEKSQLEPVINDVKQSFPAIKGLIHCAMDLRDAVYSNMTADDWNASLRPKLLATRNLHDLLPTDLDFFICLSSIAGIIGSRGQANYNAGNTYQDALAHQRAASGLAATSINLSLVVGIGVSTERSEVFQLLKDGGLLGMDENDVLNIIKAAISGRTPTQVALGASTGGQLDKLAANDPYWFADSRFAVLNQLDRQGTGAVAGGQDWKKLIAAAASPDEVYEIVLQQLLEGVSKIIKADVEDMDSRRSLPALGIDSLVAIEIRTWLLKEFQADLSVFDIVSNDPLTGFTKKVMAKSALIA.

The segment covering 1–42 has biased composition (low complexity); it reads MTLSNGSNGANGTSNGNGAHPSANGFHNAANGGANNGSANGG. A disordered region spans residues 1–52; the sequence is MTLSNGSNGANGTSNGNGAHPSANGFHNAANGGANNGSANGGAEHDAGRPQV. Positions 57 to 479 constitute a Ketosynthase family 3 (KS3) domain; that stretch reads SSAIAVIGVS…GANAHAVLDD (423 aa). Catalysis depends on for beta-ketoacyl synthase activity residues Cys230, His365, and His403. The interval 608–929 is malonyl-CoA:ACP transacylase (MAT) domain; that stretch reads TFIFTGQGAQ…FSAIKRKQDA (322 aa). The active-site For malonyltransferase activity is Ser699. Positions 994–1127 are N-terminal hotdog fold; that stretch reads LELLGVRDPR…GLVSTSYKHD (134 aa). The 314-residue stretch at 994–1307 folds into the PKS/mFAS DH domain; the sequence is LELLGVRDPR…TVPLRGASDS (314 aa). The dehydratase (DH) domain stretch occupies residues 995–1302; sequence ELLGVRDPRS…LKGCKTVPLR (308 aa). Residue His1026 is the Proton acceptor; for dehydratase activity of the active site. The C-terminal hotdog fold stretch occupies residues 1155–1307; it reads LPSVDPTVFY…TVPLRGASDS (153 aa). Asp1220 (proton donor; for dehydratase activity) is an active-site residue. The enoyl reductase (ER) domain stretch occupies residues 1714 to 2026; it reads GLLDTLEYLS…SGGHVGKIVL (313 aa). Residues 2050–2226 are ketoreductase (KR) domain; that stretch reads ATYVLIGGLG…AATSINLSLV (177 aa). The region spanning 2329–2406 is the Carrier domain; the sequence is EVYEIVLQQL…GFTKKVMAKS (78 aa). Ser2366 bears the O-(pantetheine 4'-phosphoryl)serine mark.

The protein operates within mycotoxin biosynthesis. In terms of biological role, reducing polyketide synthase; part of the gene cluster that mediates the biosynthesis of fusaric acid, a mycotoxin with low to moderate toxicity to animals and humans, but with high phytotoxic properties. L-aspartate is suggested as fusaric acid amino acid precursor that is activated and further processed to O-acetyl-L-homoserine by cluster enzymes aspartate kinase FUB3 and homoserine O-acetyltransferase FUB5, as well as enzymes of the primary metabolism. The polyketide synthase (PKS) FUB1 generates the triketide trans-2-hexenal which is presumptively released by the hydrolase FUB4 and linked to the NRPS-bound amino acid precursor by NAD(P)-dependent dehydrogenase FUB6. FUB1, FUB4, and the non-canonical NRPS Fub8 may form an enzyme complex. Further processing of the NRPS-bound intermediate might be carried out by FUB6 and the sulfhydrylase FUB7, enabling a spontaneous electrocyclization to close the carbon backbone of fusaric acid. Dihydrofusaric acid is likely to be released via reduction by the thioester reductase (TR) domain of FUB8 whereupon the final oxidation to fusaric acid may (also) be performed by the FMN-dependent dehydrogenase FUB9. This chain is Reducing polyketide synthase FUB1, found in Gibberella fujikuroi (strain CBS 195.34 / IMI 58289 / NRRL A-6831) (Bakanae and foot rot disease fungus).